The chain runs to 249 residues: Metallo-beta-lactamase type 2 (249 aa).

A signal peptide spans 1 to 22 (MLKKIKISLILALGLTSLQAFG). Residues His-98, His-100, Asp-102, His-161, and Cys-180 each contribute to the Zn(2+) site. Lys-183 is a binding site for substrate. His-222 is a Zn(2+) binding site.

It belongs to the metallo-beta-lactamase superfamily. Class-B beta-lactamase family. As to quaternary structure, monomer. Requires Zn(2+) as cofactor.

It is found in the periplasm. The enzyme catalyses a beta-lactam + H2O = a substituted beta-amino acid. Functionally, confers resistance to the different beta-lactams antibiotics (penicillin, cephalosporin and carbapenem) via the hydrolysis of the beta-lactam ring. The sequence is that of Metallo-beta-lactamase type 2 (blaB2) from Elizabethkingia meningoseptica (Chryseobacterium meningosepticum).